The chain runs to 353 residues: Protein MGF 360-13L (353 aa).

This sequence belongs to the asfivirus MGF 360 family.

Plays a role in virus cell tropism, and may be required for efficient virus replication in macrophages. This Ornithodoros (relapsing fever ticks) protein is Protein MGF 360-13L.